Here is a 306-residue protein sequence, read N- to C-terminus: Pantothenate kinase (306 aa).

An ATP-binding site is contributed by Gly-90–Ser-97.

It belongs to the prokaryotic pantothenate kinase family.

It localises to the cytoplasm. It catalyses the reaction (R)-pantothenate + ATP = (R)-4'-phosphopantothenate + ADP + H(+). The protein operates within cofactor biosynthesis; coenzyme A biosynthesis; CoA from (R)-pantothenate: step 1/5. The protein is Pantothenate kinase of Ligilactobacillus salivarius (strain UCC118) (Lactobacillus salivarius).